Here is a 90-residue protein sequence, read N- to C-terminus: DNA-directed RNA polymerase subunit omega (90 aa).

It belongs to the RNA polymerase subunit omega family. In terms of assembly, the RNAP catalytic core consists of 2 alpha, 1 beta, 1 beta' and 1 omega subunit. When a sigma factor is associated with the core the holoenzyme is formed, which can initiate transcription.

The catalysed reaction is RNA(n) + a ribonucleoside 5'-triphosphate = RNA(n+1) + diphosphate. In terms of biological role, promotes RNA polymerase assembly. Latches the N- and C-terminal regions of the beta' subunit thereby facilitating its interaction with the beta and alpha subunits. The chain is DNA-directed RNA polymerase subunit omega from Saccharophagus degradans (strain 2-40 / ATCC 43961 / DSM 17024).